Reading from the N-terminus, the 142-residue chain is Transcriptional regulator MraZ (142 aa).

2 consecutive SpoVT-AbrB domains span residues glutamate 5–glutamate 47 and alanine 76–glutamate 119.

The protein belongs to the MraZ family. In terms of assembly, forms oligomers.

It is found in the cytoplasm. Its subcellular location is the nucleoid. This chain is Transcriptional regulator MraZ, found in Desulforamulus reducens (strain ATCC BAA-1160 / DSM 100696 / MI-1) (Desulfotomaculum reducens).